The primary structure comprises 228 residues: MSPSLTWHDVIGQEKEQPYFKDTLAYVAAERRAGKTIYPPQKDIFNAFRLTELDQVKVVILGQDPYHGPNQAHGLSFSVLPGVPAPPSLGNIYKELVTDIPGFQRPNHGFLQSWAEQGVLLLNTVLTVEAGKAHSHANLGWETFTDKVIAALNEHREGVIFMLWGSHAQKKGRIINTERHYILKAPHPSPLSAHRGFLGCKHFSQANQLLQQQNQQPIDWQPKLPAVE.

Catalysis depends on D64, which acts as the Proton acceptor.

This sequence belongs to the uracil-DNA glycosylase (UDG) superfamily. UNG family.

The protein localises to the cytoplasm. It catalyses the reaction Hydrolyzes single-stranded DNA or mismatched double-stranded DNA and polynucleotides, releasing free uracil.. Excises uracil residues from the DNA which can arise as a result of misincorporation of dUMP residues by DNA polymerase or due to deamination of cytosine. The polypeptide is Uracil-DNA glycosylase (Yersinia pestis bv. Antiqua (strain Antiqua)).